A 229-amino-acid polypeptide reads, in one-letter code: Acetylornithine aminotransferase (229 aa).

Residues 95–96 and phenylalanine 122 contribute to the pyridoxal 5'-phosphate site; that span reads GA. Arginine 125 lines the N(2)-acetyl-L-ornithine pocket. 208-211 is a binding site for pyridoxal 5'-phosphate; the sequence is DEIQ.

Belongs to the class-III pyridoxal-phosphate-dependent aminotransferase family. ArgD subfamily. Homodimer. Pyridoxal 5'-phosphate serves as cofactor.

Its subcellular location is the cytoplasm. It catalyses the reaction N(2)-acetyl-L-ornithine + 2-oxoglutarate = N-acetyl-L-glutamate 5-semialdehyde + L-glutamate. It functions in the pathway amino-acid biosynthesis; L-arginine biosynthesis; N(2)-acetyl-L-ornithine from L-glutamate: step 4/4. The polypeptide is Acetylornithine aminotransferase (argD) (Bacillus amyloliquefaciens (Bacillus velezensis)).